A 175-amino-acid chain; its full sequence is Probable chemoreceptor glutamine deamidase CheD (175 aa).

It belongs to the CheD family.

It carries out the reaction L-glutaminyl-[protein] + H2O = L-glutamyl-[protein] + NH4(+). Functionally, probably deamidates glutamine residues to glutamate on methyl-accepting chemotaxis receptors (MCPs), playing an important role in chemotaxis. The protein is Probable chemoreceptor glutamine deamidase CheD of Jannaschia sp. (strain CCS1).